We begin with the raw amino-acid sequence, 381 residues long: Putative heat shock protein HSP 90-beta 2 (381 aa).

The ATP site is built by asparagine 46, aspartate 88, and lysine 107. A compositionally biased stretch (basic and acidic residues) spans 145 to 174 (KEISDGKAEEEKGEKEEENKDDEEKPKIED). The disordered stretch occupies residues 145-192 (KEISDGKAEEEKGEKEEENKDDEEKPKIEDVGSDEEDDSGKDKKKKTK). Serine 177 is modified (phosphoserine). Residues 315–347 (ELPEDGEEKKRMEERKAKFENLCKFMKETLDKK) are a coiled coil.

The protein belongs to the heat shock protein 90 family. As to quaternary structure, homodimer.

It is found in the cytoplasm. In terms of biological role, putative molecular chaperone that may promote the maturation, structural maintenance and proper regulation of specific target proteins. The polypeptide is Putative heat shock protein HSP 90-beta 2 (HSP90AB2P) (Homo sapiens (Human)).